The primary structure comprises 500 residues: Tektin-like protein 1 (500 aa).

Residues 1–25 (MPVLLPSTDRDQDSRVGAPEWHQAA) are disordered. S14 is subject to Phosphoserine. A coiled-coil region spans residues 198–229 (MLVWEREELKSMKRKMEKDMERSEALLKALAS). Residues 265–286 (VDITRPPTPRTQGLKTPPPDPV) are disordered. Y372 bears the Phosphotyrosine mark. The stretch at 422 to 448 (LTRHNLQMEKNLKELRTTHDNLAWSLN) forms a coiled coil.

Microtubule inner protein component of sperm flagellar doublet microtubules.

It localises to the cytoplasm. The protein localises to the cytoskeleton. It is found in the flagellum axoneme. Microtubule inner protein (MIP) part of the dynein-decorated doublet microtubules (DMTs) in sperm flagellar axoneme, which is required for motile flagellum beating. Forms an extensive interaction network cross-linking the lumen of axonemal doublet microtubules. This chain is Tektin-like protein 1, found in Rattus norvegicus (Rat).